Consider the following 210-residue polypeptide: Somatotropin (210 aa).

Residues 1 to 22 (MGQVFLLMPVLLVSCFLSQGAA) form the signal peptide. His-38 contributes to the Zn(2+) binding site. Cys-71 and Cys-183 form a disulfide bridge. Glu-192 provides a ligand contact to Zn(2+). Cysteines 200 and 208 form a disulfide.

This sequence belongs to the somatotropin/prolactin family.

It is found in the secreted. Functionally, growth hormone plays an important role in growth control and is involved in the regulation of several anabolic processes. Implicated as an osmoregulatory substance important for seawater adaptation. This Oncorhynchus tshawytscha (Chinook salmon) protein is Somatotropin (gh).